The sequence spans 208 residues: Outer-membrane lipoprotein LolB (208 aa).

Positions 1–23 (MKPIQKLSLFRLLPLSCVLLLTA) are cleaved as a signal peptide. Cysteine 24 carries N-palmitoyl cysteine lipidation. A lipid anchor (S-diacylglycerol cysteine) is attached at cysteine 24.

This sequence belongs to the LolB family. In terms of assembly, monomer.

It localises to the cell outer membrane. Its function is as follows. Plays a critical role in the incorporation of lipoproteins in the outer membrane after they are released by the LolA protein. This Photorhabdus laumondii subsp. laumondii (strain DSM 15139 / CIP 105565 / TT01) (Photorhabdus luminescens subsp. laumondii) protein is Outer-membrane lipoprotein LolB.